A 43-amino-acid polypeptide reads, in one-letter code: Protein PsbN (43 aa).

A helical transmembrane segment spans residues 5–27 (TLVAISISGLLVSFTGYALYTAF).

Belongs to the PsbN family.

The protein localises to the plastid. Its subcellular location is the chloroplast thylakoid membrane. In terms of biological role, may play a role in photosystem I and II biogenesis. The protein is Protein PsbN of Eucalyptus globulus subsp. globulus (Tasmanian blue gum).